Reading from the N-terminus, the 307-residue chain is MLAQRTLKSLTKAVGVGLHSGQRVELTLRPAPPDTGIVFRRVDLPQPVDIVISAQAVTDTRLASTISAGGAKVHTVEHLMSACAGLGIDNLYIDITAEEVPILDGSASSFVFLLQSAGIELQSAPKRFIRVLKPVEVREGEGATAKWARLSPYEGYKLSFEIDFDHPAVDSTGQRVEFDLSSGSYSRDIARARTFGFTKDVEMMRANGLALGGGLDNAIVMDDYKVLNSEGLRYNDEFVKHKILDAMGDLYLLGKPLLAAYSAFRSGHAMNNKLLRELLAHQDAYEVVTFADEKRAPQGFATLARAW.

Zn(2+) is bound by residues His78, His241, and Asp245. Catalysis depends on His268, which acts as the Proton donor.

Belongs to the LpxC family. Zn(2+) is required as a cofactor.

The enzyme catalyses a UDP-3-O-[(3R)-3-hydroxyacyl]-N-acetyl-alpha-D-glucosamine + H2O = a UDP-3-O-[(3R)-3-hydroxyacyl]-alpha-D-glucosamine + acetate. The protein operates within glycolipid biosynthesis; lipid IV(A) biosynthesis; lipid IV(A) from (3R)-3-hydroxytetradecanoyl-[acyl-carrier-protein] and UDP-N-acetyl-alpha-D-glucosamine: step 2/6. Its function is as follows. Catalyzes the hydrolysis of UDP-3-O-myristoyl-N-acetylglucosamine to form UDP-3-O-myristoylglucosamine and acetate, the committed step in lipid A biosynthesis. This chain is UDP-3-O-acyl-N-acetylglucosamine deacetylase, found in Polaromonas sp. (strain JS666 / ATCC BAA-500).